A 209-amino-acid chain; its full sequence is Max dimerization protein 4 (209 aa).

An interaction with SIN3A and SIN3B region spans residues 6 to 23; sequence LLLLLEAAEYLERRDREA. One can recognise a bHLH domain in the interval 53-105; sequence NNRSSHNELEKHRRAKLRLYLEQLKQLGPLGPDSTRHTTLSLLKRAKMHIKKL. Residues 137 to 209 form a disordered region; the sequence is SVERVRTDST…CRRPGCPGLS (73 aa). The segment covering 153 to 163 has biased composition (acidic residues); the sequence is DDSEQEVDIEG. The segment covering 185–195 has biased composition (polar residues); sequence SLQSSGCSDSS.

In terms of assembly, efficient DNA binding requires dimerization with another bHLH protein. Binds DNA as a heterodimer with MAX. Interacts with SIN3A AND SIN3B. Interacts with RNF17.

The protein localises to the nucleus. Functionally, transcriptional repressor. Binds with MAX to form a sequence-specific DNA-binding protein complex which recognizes the core sequence 5'-CAC[GA]TG-3'. Antagonizes MYC transcriptional activity by competing for MAX and suppresses MYC dependent cell transformation. The polypeptide is Max dimerization protein 4 (Mxd4) (Mus musculus (Mouse)).